A 179-amino-acid chain; its full sequence is ATP synthase subunit b, chloroplastic (179 aa).

A helical transmembrane segment spans residues L28–L46.

It belongs to the ATPase B chain family. In terms of assembly, F-type ATPases have 2 components, F(1) - the catalytic core - and F(0) - the membrane proton channel. F(1) has five subunits: alpha(3), beta(3), gamma(1), delta(1), epsilon(1). F(0) has four main subunits: a(1), b(1), b'(1) and c(10-14). The alpha and beta chains form an alternating ring which encloses part of the gamma chain. F(1) is attached to F(0) by a central stalk formed by the gamma and epsilon chains, while a peripheral stalk is formed by the delta, b and b' chains.

Its subcellular location is the plastid. The protein resides in the chloroplast thylakoid membrane. Functionally, f(1)F(0) ATP synthase produces ATP from ADP in the presence of a proton or sodium gradient. F-type ATPases consist of two structural domains, F(1) containing the extramembraneous catalytic core and F(0) containing the membrane proton channel, linked together by a central stalk and a peripheral stalk. During catalysis, ATP synthesis in the catalytic domain of F(1) is coupled via a rotary mechanism of the central stalk subunits to proton translocation. In terms of biological role, component of the F(0) channel, it forms part of the peripheral stalk, linking F(1) to F(0). This chain is ATP synthase subunit b, chloroplastic, found in Thalassiosira pseudonana (Marine diatom).